Consider the following 432-residue polypeptide: Homeobox protein Hox-D3 (432 aa).

Disordered regions lie at residues 43-62 (YSTPHQPYPPPAAASSLDTD), 68-197 (CSIQ…SKRV), 253-280 (QKAKGILHSPASQSPERSPPLGGAAGHV), and 400-432 (HHGPCDPHPTYTDLSAHHSSQGRLPEAPKLTHL). The span at 97 to 106 (NSQGGGGGSQ) shows a compositional bias: gly residues. Residues 116 to 131 (PPQPPPPPPTLPPSSP) show a composition bias toward pro residues. Polar residues predominate over residues 148-158 (NASSSSATISK). Positions 160-165 (IFPWMK) match the Antp-type hexapeptide motif. Residues 194–253 (SKRVRTAYTSAQLVELEKEFHFNRYLCRPRRVEMANLLNLTERQIKIWFQNRRMKYKKDQ) constitute a DNA-binding region (homeobox).

Belongs to the Antp homeobox family.

It is found in the nucleus. In terms of biological role, sequence-specific transcription factor which is part of a developmental regulatory system that provides cells with specific positional identities on the anterior-posterior axis. This Homo sapiens (Human) protein is Homeobox protein Hox-D3 (HOXD3).